A 382-amino-acid chain; its full sequence is Lipoyl synthase, mitochondrial (382 aa).

Residues 1–30 (MHGRRHLAASLARALTYAPSRSISSTPSLL) constitute a mitochondrion transit peptide. Over residues 25-34 (STPSLLQTLD) the composition is skewed to polar residues. A disordered region spans residues 25–46 (STPSLLQTLDPSTPSPAAAPPT). Residues cysteine 112, cysteine 117, cysteine 123, cysteine 143, cysteine 147, cysteine 150, and serine 359 each contribute to the [4Fe-4S] cluster site. One can recognise a Radical SAM core domain in the interval 128–348 (ETGTATATIM…RSLGVDMGFR (221 aa)).

The protein belongs to the radical SAM superfamily. Lipoyl synthase family. It depends on [4Fe-4S] cluster as a cofactor.

It localises to the mitochondrion. It carries out the reaction [[Fe-S] cluster scaffold protein carrying a second [4Fe-4S](2+) cluster] + N(6)-octanoyl-L-lysyl-[protein] + 2 oxidized [2Fe-2S]-[ferredoxin] + 2 S-adenosyl-L-methionine + 4 H(+) = [[Fe-S] cluster scaffold protein] + N(6)-[(R)-dihydrolipoyl]-L-lysyl-[protein] + 4 Fe(3+) + 2 hydrogen sulfide + 2 5'-deoxyadenosine + 2 L-methionine + 2 reduced [2Fe-2S]-[ferredoxin]. It participates in protein modification; protein lipoylation via endogenous pathway; protein N(6)-(lipoyl)lysine from octanoyl-[acyl-carrier-protein]: step 2/2. Functionally, catalyzes the radical-mediated insertion of two sulfur atoms into the C-6 and C-8 positions of the octanoyl moiety bound to the lipoyl domains of lipoate-dependent enzymes, thereby converting the octanoylated domains into lipoylated derivatives. The protein is Lipoyl synthase, mitochondrial of Oryza sativa subsp. japonica (Rice).